We begin with the raw amino-acid sequence, 451 residues long: Phosphoglucosamine mutase (451 aa).

Residue S107 is the Phosphoserine intermediate of the active site. Mg(2+) is bound by residues S107, D246, D248, and D250. Phosphoserine is present on S107.

The protein belongs to the phosphohexose mutase family. It depends on Mg(2+) as a cofactor. In terms of processing, activated by phosphorylation.

It carries out the reaction alpha-D-glucosamine 1-phosphate = D-glucosamine 6-phosphate. In terms of biological role, catalyzes the conversion of glucosamine-6-phosphate to glucosamine-1-phosphate. The chain is Phosphoglucosamine mutase from Burkholderia cenocepacia (strain HI2424).